Here is a 45-residue protein sequence, read N- to C-terminus: Cytochrome b559 subunit beta (45 aa).

A helical membrane pass occupies residues 20-36 (WLAVHTLAVPTVFFLGA). Residue His24 coordinates heme.

The protein belongs to the PsbE/PsbF family. Heterodimer of an alpha subunit and a beta subunit. PSII is composed of 1 copy each of membrane proteins PsbA, PsbB, PsbC, PsbD, PsbE, PsbF, PsbH, PsbI, PsbJ, PsbK, PsbL, PsbM, PsbT, PsbX, PsbY, PsbZ, Psb30/Ycf12, peripheral proteins PsbO, CyanoQ (PsbQ), PsbU, PsbV and a large number of cofactors. It forms dimeric complexes. The cofactor is heme b.

Its subcellular location is the cellular thylakoid membrane. Its function is as follows. This b-type cytochrome is tightly associated with the reaction center of photosystem II (PSII). PSII is a light-driven water:plastoquinone oxidoreductase that uses light energy to abstract electrons from H(2)O, generating O(2) and a proton gradient subsequently used for ATP formation. It consists of a core antenna complex that captures photons, and an electron transfer chain that converts photonic excitation into a charge separation. The polypeptide is Cytochrome b559 subunit beta (Trichormus variabilis (strain ATCC 29413 / PCC 7937) (Anabaena variabilis)).